A 626-amino-acid chain; its full sequence is Chaperone protein HtpG (626 aa).

An a; substrate-binding region spans residues 1-331; sequence MSETVERHEF…TDDLPLNVSR (331 aa). The tract at residues 332–544 is b; that stretch reads EMLQSTPTLQ…GMGPDLQMQR (213 aa). Residues 545–626 are c; sequence LLRRAGRGFG…GTAAKPAGSA (82 aa).

Belongs to the heat shock protein 90 family. In terms of assembly, homodimer.

It is found in the cytoplasm. Molecular chaperone. Has ATPase activity. The sequence is that of Chaperone protein HtpG from Methylorubrum extorquens (strain CM4 / NCIMB 13688) (Methylobacterium extorquens).